Consider the following 549-residue polypeptide: Lipase 4 (549 aa).

The first 15 residues, M1 to A15, serve as a signal peptide directing secretion. C75 and C112 are oxidised to a cystine. S224 serves as the catalytic Acyl-ester intermediate. C283 and C292 are joined by a disulfide. The active-site Charge relay system is E356. The N-linked (GlcNAc...) asparagine glycan is linked to N366. Residue H464 is the Charge relay system of the active site.

This sequence belongs to the type-B carboxylesterase/lipase family.

The catalysed reaction is a triacylglycerol + H2O = a diacylglycerol + a fatty acid + H(+). The protein is Lipase 4 (LIP4) of Diutina rugosa (Yeast).